A 602-amino-acid polypeptide reads, in one-letter code: uncharacterized protein (602 aa).

In terms of domain architecture, Helicase ATP-binding spans 51 to 210; the sequence is QYLGTQPRDF…PFVSYQPDAD (160 aa). The segment covering 430–439 has biased composition (basic and acidic residues); that stretch reads PHRESAHDPL. Disordered regions lie at residues 430–452 and 518–538; these read PHRE…TERG and RAQL…ASVH. Over residues 523–534 the composition is skewed to polar residues; that stretch reads KGATQPATSGAS.

To M.leprae ML1624.

This is an uncharacterized protein from Mycobacterium tuberculosis (strain ATCC 25618 / H37Rv).